Here is a 442-residue protein sequence, read N- to C-terminus: Transposase InsG for insertion sequence element IS4 (442 aa).

The protein belongs to the transposase 11 family.

Its function is as follows. Involved in the transposition of the insertion sequence IS4. The chain is Transposase InsG for insertion sequence element IS4 (insG) from Escherichia coli (strain K12).